The following is a 567-amino-acid chain: MLILSLFILIIYSSIINNIDTINLLSSSNKIGWKLQNYNIIRIGIIIILYSLYIFKDISLSYIFNNYNNNNDLNIYIFNDLYKLNIFNIYIIFLLLIVIISLLSINTTYLTKIQIKNNNNNISIGKSDNYIELNIYYISIIIFNIIGLILLLTSNNLISIFISIELQSYSLYILTGIIPKSQKSGHNSLFYYLIGGIGSIIILYGISLLYYITSNIFINNINLIYSLDIYNINNNILIGWLFIIIGLLIKIGAAPMYNWSILLYSNSNTIITSYISLIPKISILSYILLIILNLYNLNNLNNLFNNNNNNNLIYILSIIIILSLIIGSIGGLTQIKIKNILAYSGLLNIGYFLLIILSLINNNNINSILAYIIYITQYCFNHISIFILLIIAIIYNNNYNNFITNKNLIYIYELNYIKNNRYLIFCLIIIIGSFIGIPPLFGFYGKYYLLISSINSNYLFLSLLLIISSIISSIYYLYFLNITLFDNNNNKNNNNNNNNESLLIPSFNIINDIKNNTSLSLSNKLKNNQVGNYITYILSSYILIILFNFIQWKNILKGTYLISILLF.

Transmembrane regions (helical) follow at residues 2 to 22 (LILS…IDTI), 43 to 63 (IGII…LSYI), 85 to 105 (NIFN…LLSI), 133 to 153 (LNIY…LLLT), 158 to 178 (ISIF…TGII), 189 to 209 (LFYY…ISLL), 236 to 256 (ILIG…AAPM), 274 to 294 (YISL…ILNL), 312 to 332 (LIYI…IGGL), 340 to 360 (ILAY…LSLI), 372 to 392 (IIYI…LIIA), 423 to 443 (LIFC…LFGF), 459 to 479 (LFLS…YLYF), and 530 to 550 (VGNY…FNFI).

The protein belongs to the complex I subunit 2 family.

Its subcellular location is the mitochondrion inner membrane. The enzyme catalyses a ubiquinone + NADH + 5 H(+)(in) = a ubiquinol + NAD(+) + 4 H(+)(out). In terms of biological role, core subunit of the mitochondrial membrane respiratory chain NADH dehydrogenase (Complex I) that is believed to belong to the minimal assembly required for catalysis. Complex I functions in the transfer of electrons from NADH to the respiratory chain. The immediate electron acceptor for the enzyme is believed to be ubiquinone. This chain is NADH-ubiquinone oxidoreductase chain 2 (ND2), found in Wickerhamomyces canadensis (Yeast).